A 109-amino-acid chain; its full sequence is Insulin (109 aa).

A signal peptide spans 1–24 (MAPWMHLLTVLALLALWGPNSVQA). Cystine bridges form between Cys-31/Cys-93, Cys-43/Cys-106, and Cys-92/Cys-97. Residues 56–84 (ELEDLQVEQAELGLEAGGLQPSALEMILQ) constitute a propeptide, c peptide.

It belongs to the insulin family. As to quaternary structure, heterodimer of a B chain and an A chain linked by two disulfide bonds.

Its subcellular location is the secreted. Functionally, insulin decreases blood glucose concentration. It increases cell permeability to monosaccharides, amino acids and fatty acids. It accelerates glycolysis, the pentose phosphate cycle, and glycogen synthesis in liver. The sequence is that of Insulin (INS) from Octodon degus (Degu).